We begin with the raw amino-acid sequence, 174 residues long: uncharacterized protein (174 aa).

Residues 126–146 (AIDEFIITVIPVVLGSGIPLF) form a helical membrane-spanning segment.

To B.subtilis YyaP.

Its subcellular location is the membrane. This is an uncharacterized protein from Bacillus subtilis (strain 168).